A 1061-amino-acid chain; its full sequence is E3 ubiquitin-protein ligase Smurf1 (1061 aa).

A C2 domain is found at 1–116; sequence MNKLDYPRRN…KGAGFQRLDL (116 aa). Disordered stretches follow at residues 143–176 and 188–496; these read SGNP…WEER and HATK…SGQR. One can recognise a WW 1 domain in the interval 167–200; sequence DSLPEGWEERRTDNGRVYYVNHATKSTQWDRPRQ. Polar residues-rich tracts occupy residues 207–225 and 233–255; these read SHAT…NSGD and TRST…SVTA. Ser262 bears the Phosphoserine mark. The segment covering 264 to 273 has biased composition (polar residues); the sequence is EILSSVGKEN. Low complexity-rich tracts occupy residues 274 to 300 and 311 to 322; these read TSPT…SAGG and PATPTSSTTSAS. Positions 348–359 are enriched in polar residues; sequence TPTSPTGQQNYV. The segment covering 360-378 has biased composition (low complexity); the sequence is NGNAQNGSTSGNGSGQAAQ. Over residues 379-392 the composition is skewed to polar residues; that stretch reads PQSASNGWTQEDAA. Residues 393 to 409 are compositionally biased toward low complexity; the sequence is TTTSPSTTTSPPRHSQS. Thr412 carries the post-translational modification Phosphothreonine. Position 416 is a phosphoserine (Ser416). Over residues 417 to 439 the composition is skewed to polar residues; that stretch reads PPASVTPSANGNVHSPNANSTPA. The span at 480 to 494 shows a compositional bias: gly residues; it reads RNGGTSGGGGGGGSG. 2 WW domains span residues 513 to 546 and 561 to 594; these read LDLP…DPRI and GPLP…DPRL. Positions 513 to 602 are interaction with MAD; it reads LDLPPGYEMR…RLSGSILQMI (90 aa). 2 stretches are compositionally biased toward low complexity: residues 608–617 and 624–656; these read PPTSAANAGT and TPAT…TNPP. The tract at residues 608-661 is disordered; that stretch reads PPTSAANAGTPAPPSATPATPSAAAAVPPQATPASNATPTTLTTTTNPPHRIVP. Residues 723-1061 enclose the HECT domain; it reads RAKDMRKRLM…VEETCGFAVE (339 aa). Catalysis depends on Cys1029, which acts as the Glycyl thioester intermediate.

Interacts with phosphorylated MAD.

The enzyme catalyses S-ubiquitinyl-[E2 ubiquitin-conjugating enzyme]-L-cysteine + [acceptor protein]-L-lysine = [E2 ubiquitin-conjugating enzyme]-L-cysteine + N(6)-ubiquitinyl-[acceptor protein]-L-lysine.. Its pathway is protein modification; protein ubiquitination. Its function is as follows. E3 ubiquitin-protein ligase which accepts ubiquitin from an E2 ubiquitin-conjugating enzyme in the form of a thioester and then directly transfers the ubiquitin to targeted substrates. Down-regulates Dpp signaling after gastrulation by promoting MAD ubiquitination and subsequent degradation. This chain is E3 ubiquitin-protein ligase Smurf1, found in Drosophila melanogaster (Fruit fly).